The chain runs to 334 residues: MMNLKYLLFFCLVQALHYCYAYGDPSLSNELDRFNPCPYSDDTVKMIILTRENKKHDFYTLNTIKNHNEFKKSTIKHQVVFITHGFTSTATAENFLAMAEALLDKGNYLVILIDWRVAACTNEMAGVKLAYYSYAASNTRLVGNYIATVTKMLVQQYNVPMANIRLVGHSLGAHTSGFAGKKVQELRLGKYSEIIGLDPAGPSFKSQECSQRICETDANYVQIIHTSNHLGTLVTLGTVDFYMNNGYNQPGCGLPIIGETCSHTRAVKYFTECIRHECCLIGVPQSKNPQPVSKCTRNQCVCVGLNAKTYPKTGSFYVPVESKAPYCNNKGKII.

A signal peptide spans 1 to 23 (MMNLKYLLFFCLVQALHYCYAYG). A propeptide spanning residues 24–33 (DPSLSNELDR) is cleaved from the precursor. Cysteines 37 and 120 form a disulfide. The active-site Nucleophile is Ser-170. Asp-198 (charge relay system) is an active-site residue. 2 disulfides stabilise this stretch: Cys-209–Cys-214 and Cys-252–Cys-261. His-263 (charge relay system) is an active-site residue. Disulfide bonds link Cys-278–Cys-302, Cys-279–Cys-327, and Cys-295–Cys-300.

Belongs to the AB hydrolase superfamily. Lipase family. In terms of processing, not glycosylated. In terms of tissue distribution, expressed by the venom gland.

Its subcellular location is the secreted. It carries out the reaction a 1,2-diacyl-sn-glycero-3-phosphocholine + H2O = a 2-acyl-sn-glycero-3-phosphocholine + a fatty acid + H(+). Catalyzes the hydrolysis of phosphatidylcholine with phospholipase A1 activity (6.3 U/ml). May act as an allergen and induce hemolytic activity. This is Phospholipase A1 2 from Vespa affinis (Lesser banded hornet).